The following is a 267-amino-acid chain: Undecaprenyl-diphosphatase (267 aa).

8 helical membrane-spanning segments follow: residues 5-25 (TIVA…PVSS), 45-65 (FEVL…AGRL), 82-102 (ILAV…AHRI), 108-128 (FETP…LLFV), 143-163 (FPLP…IPGV), 183-203 (AAEF…VYDL), 213-233 (AATG…VVVV), and 243-263 (YGYG…LLAL).

The protein belongs to the UppP family.

The protein resides in the cell inner membrane. It carries out the reaction di-trans,octa-cis-undecaprenyl diphosphate + H2O = di-trans,octa-cis-undecaprenyl phosphate + phosphate + H(+). Functionally, catalyzes the dephosphorylation of undecaprenyl diphosphate (UPP). Confers resistance to bacitracin. The protein is Undecaprenyl-diphosphatase of Paracoccus denitrificans (strain Pd 1222).